The primary structure comprises 120 residues: Small ribosomal subunit protein eS25 (120 aa).

The disordered stretch occupies residues 1–32; that stretch reads MPPKAGQTKKAKMEAANKGAKKTTKKWSKGQS. Positions 19 to 28 are enriched in basic residues; it reads GAKKTTKKWS.

This sequence belongs to the eukaryotic ribosomal protein eS25 family.

The protein is Small ribosomal subunit protein eS25 (RPS25) of Leishmania infantum.